We begin with the raw amino-acid sequence, 200 residues long: MELNFEKPLSLLTLDEIDQQEGGVIQSFRTGHTSPYPDPADWLNGEEPPPGVFITSVEKVLNWSRHYSLWPVMFGLACCAIEMMCMAASRWDLARFGMDIFRASPRQADLMIVAGTLTWKMAPWLKRIYDQMPEPKWVLAMGACGTSGGLFRDSYSVVPGFNLVVPVDVYVPGCPPRPEALMRAIMDIHEKIDKTCILKR.

The [4Fe-4S] cluster site is built by C78, C79, C144, and C174.

The protein belongs to the complex I 20 kDa subunit family. NDH-1 is composed of 14 different subunits. Subunits NuoB, C, D, E, F, and G constitute the peripheral sector of the complex. [4Fe-4S] cluster serves as cofactor.

It localises to the cell membrane. The catalysed reaction is a quinone + NADH + 5 H(+)(in) = a quinol + NAD(+) + 4 H(+)(out). Functionally, NDH-1 shuttles electrons from NADH, via FMN and iron-sulfur (Fe-S) centers, to quinones in the respiratory chain. The immediate electron acceptor for the enzyme in this species is believed to be ubiquinone. Couples the redox reaction to proton translocation (for every two electrons transferred, four hydrogen ions are translocated across the cytoplasmic membrane), and thus conserves the redox energy in a proton gradient. The protein is NADH-quinone oxidoreductase subunit B of Dehalococcoides mccartyi (strain ATCC BAA-2100 / JCM 16839 / KCTC 5957 / BAV1).